We begin with the raw amino-acid sequence, 217 residues long: Ras-related protein Rab11B (217 aa).

GTP is bound at residue 21 to 28 (GDSGVGKS). Residues 43–51 (SKSTIGVEF) carry the Effector region motif. GTP is bound by residues 69–73 (DTAGQ) and 127–130 (NKAD). 2 S-geranylgeranyl cysteine lipidation sites follow: cysteine 214 and cysteine 215.

This sequence belongs to the small GTPase superfamily. Rab family.

Its subcellular location is the cell membrane. The sequence is that of Ras-related protein Rab11B (RAB11B) from Nicotiana tabacum (Common tobacco).